Consider the following 276-residue polypeptide: NAD-capped RNA hydrolase NudC (276 aa).

Arg-82 contributes to the substrate binding site. 2 residues coordinate Zn(2+): Cys-112 and Cys-115. Substrate is bound at residue Glu-125. 2 residues coordinate Zn(2+): Cys-130 and Cys-133. Substrate is bound at residue Tyr-138. In terms of domain architecture, Nudix hydrolase spans 139–262 (PRISPSMIVL…SIARYLIDVY (124 aa)). The a divalent metal cation site is built by Ala-172, Glu-188, and Glu-192. The Nudix box signature appears at 173-194 (GFAEPGESAEDCLIREVREEVQ). Residue 206–213 (QCWPFPHS) participates in substrate binding. A divalent metal cation is bound at residue Glu-233. Ala-255 contacts substrate.

The protein belongs to the Nudix hydrolase family. NudC subfamily. In terms of assembly, homodimer. Requires Mg(2+) as cofactor. The cofactor is Mn(2+). Zn(2+) serves as cofactor.

The enzyme catalyses a 5'-end NAD(+)-phospho-ribonucleoside in mRNA + H2O = a 5'-end phospho-adenosine-phospho-ribonucleoside in mRNA + beta-nicotinamide D-ribonucleotide + 2 H(+). The catalysed reaction is NAD(+) + H2O = beta-nicotinamide D-ribonucleotide + AMP + 2 H(+). It catalyses the reaction NADH + H2O = reduced beta-nicotinamide D-ribonucleotide + AMP + 2 H(+). Its function is as follows. mRNA decapping enzyme that specifically removes the nicotinamide adenine dinucleotide (NAD) cap from a subset of mRNAs by hydrolyzing the diphosphate linkage to produce nicotinamide mononucleotide (NMN) and 5' monophosphate mRNA. The NAD-cap is present at the 5'-end of some mRNAs and stabilizes RNA against 5'-processing. Has preference for mRNAs with a 5'-end purine. Catalyzes the hydrolysis of a broad range of dinucleotide pyrophosphates. This Pseudomonas fluorescens (strain Pf0-1) protein is NAD-capped RNA hydrolase NudC.